We begin with the raw amino-acid sequence, 68 residues long: Large ribosomal subunit protein uL29 (68 aa).

The protein belongs to the universal ribosomal protein uL29 family.

The polypeptide is Large ribosomal subunit protein uL29 (Rhodopseudomonas palustris (strain BisB18)).